We begin with the raw amino-acid sequence, 253 residues long: Ditrans,polycis-undecaprenyl-diphosphate synthase ((2E,6E)-farnesyl-diphosphate specific) (253 aa).

The active site involves Asp-25. Mg(2+) is bound at residue Asp-25. Residues 26-29 (GNGR), Trp-30, Arg-38, His-42, and 70-72 (SSE) contribute to the substrate site. Asn-73 functions as the Proton acceptor in the catalytic mechanism. Substrate is bound by residues Trp-74, Arg-76, and Arg-193. His-198 contacts Mg(2+). Substrate is bound at residue 199–201 (RIS). Glu-212 provides a ligand contact to Mg(2+).

This sequence belongs to the UPP synthase family. Homodimer. Mg(2+) is required as a cofactor.

It catalyses the reaction 8 isopentenyl diphosphate + (2E,6E)-farnesyl diphosphate = di-trans,octa-cis-undecaprenyl diphosphate + 8 diphosphate. Its function is as follows. Catalyzes the sequential condensation of isopentenyl diphosphate (IPP) with (2E,6E)-farnesyl diphosphate (E,E-FPP) to yield (2Z,6Z,10Z,14Z,18Z,22Z,26Z,30Z,34E,38E)-undecaprenyl diphosphate (di-trans,octa-cis-UPP). UPP is the precursor of glycosyl carrier lipid in the biosynthesis of bacterial cell wall polysaccharide components such as peptidoglycan and lipopolysaccharide. This chain is Ditrans,polycis-undecaprenyl-diphosphate synthase ((2E,6E)-farnesyl-diphosphate specific), found in Pectobacterium atrosepticum (strain SCRI 1043 / ATCC BAA-672) (Erwinia carotovora subsp. atroseptica).